Here is a 173-residue protein sequence, read N- to C-terminus: Photosystem I assembly protein Ycf3 (173 aa).

TPR repeat units lie at residues 36 to 69 (AFAY…EQGE), 73 to 106 (SYIL…NPRL), and 121 to 154 (GELS…APNN).

The protein belongs to the Ycf3 family.

It localises to the cellular thylakoid membrane. In terms of biological role, essential for the assembly of the photosystem I (PSI) complex. May act as a chaperone-like factor to guide the assembly of the PSI subunits. The polypeptide is Photosystem I assembly protein Ycf3 (Synechococcus sp. (strain JA-2-3B'a(2-13)) (Cyanobacteria bacterium Yellowstone B-Prime)).